We begin with the raw amino-acid sequence, 577 residues long: ABC transporter G family member 4 (577 aa).

Residues 6–248 (LSTSSISYAK…LLSKGFTVPS (243 aa)) form the ABC transporter domain. ATP is bound at residue 48–55 (GPSGAGKS). Residues 299–509 (TEISLLSSRF…ALDALLINEY (211 aa)) enclose the ABC transmembrane type-2 domain. The next 7 membrane-spanning stretches (helical) occupy residues 318 to 338 (LLLTNILESLVVGLVLGTIYL), 353 to 373 (LFAFTLTFLLSSTTQTLPIFI), 400 to 420 (VFLPYLLLIAIIYSVSLYFLV), 429 to 449 (LAYFVLVIWIIVLMANSFVLF), 458 to 478 (IAGTSSVTILLAAFFLFSGYF), 487 to 507 (YWLFMYFFSMYKYALDALLIN), and 548 to 568 (FNVYMLLGFFVLYRVLCFLVL).

Belongs to the ABC transporter superfamily. ABCG family. Eye pigment precursor importer (TC 3.A.1.204) subfamily.

Its subcellular location is the membrane. The polypeptide is ABC transporter G family member 4 (ABCG4) (Arabidopsis thaliana (Mouse-ear cress)).